Here is a 434-residue protein sequence, read N- to C-terminus: Trigger factor (434 aa).

The region spanning 161–246 (EDRATIDFTG…LKKVEERELP (86 aa)) is the PPIase FKBP-type domain.

The protein belongs to the FKBP-type PPIase family. Tig subfamily.

The protein resides in the cytoplasm. The catalysed reaction is [protein]-peptidylproline (omega=180) = [protein]-peptidylproline (omega=0). Its function is as follows. Involved in protein export. Acts as a chaperone by maintaining the newly synthesized protein in an open conformation. Functions as a peptidyl-prolyl cis-trans isomerase. The polypeptide is Trigger factor (Pectobacterium atrosepticum (strain SCRI 1043 / ATCC BAA-672) (Erwinia carotovora subsp. atroseptica)).